A 436-amino-acid chain; its full sequence is ATP-dependent protease ATPase subunit HslU (436 aa).

ATP contacts are provided by residues Ile19, 61–66 (GVGKTE), Asp249, Glu314, and Arg386.

It belongs to the ClpX chaperone family. HslU subfamily. A double ring-shaped homohexamer of HslV is capped on each side by a ring-shaped HslU homohexamer. The assembly of the HslU/HslV complex is dependent on binding of ATP.

The protein localises to the cytoplasm. In terms of biological role, ATPase subunit of a proteasome-like degradation complex; this subunit has chaperone activity. The binding of ATP and its subsequent hydrolysis by HslU are essential for unfolding of protein substrates subsequently hydrolyzed by HslV. HslU recognizes the N-terminal part of its protein substrates and unfolds these before they are guided to HslV for hydrolysis. The sequence is that of ATP-dependent protease ATPase subunit HslU from Bartonella bacilliformis (strain ATCC 35685 / KC583 / Herrer 020/F12,63).